The chain runs to 56 residues: Small ribosomal subunit protein bS21 (56 aa).

Belongs to the bacterial ribosomal protein bS21 family.

In Geobacillus stearothermophilus (Bacillus stearothermophilus), this protein is Small ribosomal subunit protein bS21 (rpsU).